The following is a 519-amino-acid chain: 3-octaprenyl-4-hydroxybenzoate carboxy-lyase (519 aa).

Asn-177 is a Mn(2+) binding site. Residues 180–182, 194–196, and 199–200 each bind prenylated FMN; these read IYR, RWL, and RG. Residue Glu-243 participates in Mn(2+) binding. The active-site Proton donor is the Asp-318.

It belongs to the UbiD family. In terms of assembly, homohexamer. The cofactor is prenylated FMN. Mn(2+) serves as cofactor.

The protein resides in the cell membrane. The catalysed reaction is a 4-hydroxy-3-(all-trans-polyprenyl)benzoate + H(+) = a 2-(all-trans-polyprenyl)phenol + CO2. It functions in the pathway cofactor biosynthesis; ubiquinone biosynthesis. Functionally, catalyzes the decarboxylation of 3-octaprenyl-4-hydroxy benzoate to 2-octaprenylphenol, an intermediate step in ubiquinone biosynthesis. In Burkholderia mallei (strain ATCC 23344), this protein is 3-octaprenyl-4-hydroxybenzoate carboxy-lyase.